Reading from the N-terminus, the 68-residue chain is Large ribosomal subunit protein bL35 (68 aa).

Belongs to the bacterial ribosomal protein bL35 family.

The protein is Large ribosomal subunit protein bL35 of Aster yellows witches'-broom phytoplasma (strain AYWB).